Reading from the N-terminus, the 973-residue chain is Sensor histidine kinase TmoS (973 aa).

The PAS 1 domain maps to 32–103 (REELARIIFD…NQKRLVEAAS (72 aa)). In terms of domain architecture, PAC 1 spans 108–162 (VRCDIEILGKSGGREVIAVDFSLLPIRDEQENIVFLLAEGRNITDKKKAEAMLAL). Positions 187–405 (KVSHELRTPL…LFQVKLPLNA (219 aa)) constitute a Histidine kinase 1 domain. At His-190 the chain carries Phosphohistidine; by autocatalysis. The region spanning 452–567 (RVLIVEDNPD…ELRARVSNLI (116 aa)) is the Response regulatory domain. Asp-500 carries the post-translational modification 4-aspartylphosphate. Residues 611 to 681 (SEARWKAVYE…QRLARLLQSG (71 aa)) enclose the PAS 2 domain. One can recognise a PAC 2 domain in the interval 685-737 (YSVECSYLCKNGSTIWANASVSLMSPRVDEPQVILQIIDDITEKKQAQETLNQ). The Histidine kinase 2 domain maps to 757–973 (YIAHEINQPL…ACFFVSIPVS (217 aa)). His-760 carries the phosphohistidine modification.

In terms of processing, autophosphorylated. Activation requires a sequential transfer of a phosphate group from a His in the primary transmitter domain, to an Asp in the receiver domain and to a His in the secondary transmitter domain.

The protein localises to the cytoplasm. The catalysed reaction is ATP + protein L-histidine = ADP + protein N-phospho-L-histidine.. Activity is regulated by agonists and antagonists. Binding of agonists such as toluene or benzene to TmoS stimulates autophosphorylation. Toluene causes the most pronounced increase, followed by benzene, chlorobenzene and ethylbenzene. Activity is inhibited by antagonists such as o-xylene, o-chlorotoluene and trimethylbenzene isomers, which bind to TmoS but do not stimulate autophosphorylation. In terms of biological role, member of the two-component regulatory system TmoS/TmoT involved in the regulation of toluene degradation. Probably phosphorylates TmoT via a four-step phosphorelay in response to toluene. Can also be induced by benzene and ethylbenzene. This chain is Sensor histidine kinase TmoS (tmoS), found in Ectopseudomonas mendocina (Pseudomonas mendocina).